A 313-amino-acid chain; its full sequence is Ester hydrolase C11orf54 homolog (313 aa).

The Zn(2+) site is built by H264, H266, and H276.

As to quaternary structure, monomer. Requires Zn(2+) as cofactor.

It localises to the nucleus. The protein localises to the cytoplasm. In terms of biological role, exhibits ester hydrolase activity on the substrate p-nitrophenyl acetate, in vitro. May regulate DNA damage and repair by regulating HIF1A degradation via chaperone-mediated autophagy (CMA). This Xenopus tropicalis (Western clawed frog) protein is Ester hydrolase C11orf54 homolog.